The following is an 895-amino-acid chain: Cellulose 1,4-beta-cellobiosidase (895 aa).

Positions 1-27 (MNFRRMLCAAIVLTIVLSIMLPSTVFA) are cleaved as a signal peptide. The CBM-cenC domain maps to 40–199 (NDLLYERTFD…YLDDVSLYDP (160 aa)). Residues 199-240 (PRFVKPVEYVLPQPDVRVNQVGYLPFAKKYATVVSSSTSPLK) are linker. Residues 241–815 (WQLLNSANQV…WVTAYLDEID (575 aa)) form a catalytic region. Residue Asp-386 is the Nucleophile of the active site. Active-site residues include His-737, Asp-786, and Glu-795. One can recognise a Dockerin domain in the interval 828–894 (PEVIYGDCNG…ILKEIDVLPH (67 aa)).

It belongs to the glycosyl hydrolase 9 (cellulase E) family.

The protein resides in the secreted. The catalysed reaction is Hydrolysis of (1-&gt;4)-beta-D-glucosidic linkages in cellulose and cellotetraose, releasing cellobiose from the non-reducing ends of the chains.. Inhibited by cellobiose. The protein is Cellulose 1,4-beta-cellobiosidase (celK) of Acetivibrio thermocellus (Hungateiclostridium thermocellum).